Consider the following 89-residue polypeptide: Small ribosomal subunit protein uS15c (89 aa).

The protein belongs to the universal ribosomal protein uS15 family. Part of the 30S ribosomal subunit.

The protein localises to the plastid. It localises to the organellar chromatophore. This Paulinella chromatophora protein is Small ribosomal subunit protein uS15c (rps15).